A 322-amino-acid polypeptide reads, in one-letter code: MKISVIISNYNYARYLSRAINSVLAQTHSDIEIVIVDDGSTDNSRDVITQLQEQAPDKIKPIFQANQGQGGAFNAGFAAATGEVVAFLDADDVWKPHKLQRIVEVFQTSDVVGVMHHLDIIDGNDKTIDQASTQGPKLSEDLASVILQTGNAWCFPPTSGLAYRREVLEKVFPIDPVKWRIWADGCIIYCTAFLGKIKTLQENLAYYRIHGANNHMSAASATSEQEAKSQAGIEMTNQYINDFLVRIGYGARVDLSRNLQYRRTKYYQRSQWDLREVWGISRLILGWPFYSGQERAYYLARFLFKSGKFLLRSDVHTESTTI.

The protein belongs to the glycosyltransferase 2 family.

This is an uncharacterized protein from Nostoc sp. (strain PCC 7120 / SAG 25.82 / UTEX 2576).